We begin with the raw amino-acid sequence, 343 residues long: NADH-quinone oxidoreductase subunit H (343 aa).

8 consecutive transmembrane segments (helical) span residues 21-41 (WTLVWTILKIAVLIAPILFCV), 95-115 (FILAPILTFSTALVSWAVVPF), 124-144 (VNVGVLFILAMSSLGAYGVLL), 172-192 (MGFTLVPVIMLSGSLNLGDIV), 197-217 (GLWYALPLLPGFFIYFISVVA), 257-277 (IIMVSVLGSLMFLGGWLPPIE), 281-301 (FIPGIVWLILKTGVLIFFFLW), and 317-337 (LGWKVFLPISLAWIFIVGLAM).

The protein belongs to the complex I subunit 1 family. In terms of assembly, NDH-1 is composed of 14 different subunits. Subunits NuoA, H, J, K, L, M, N constitute the membrane sector of the complex.

The protein localises to the cell inner membrane. It carries out the reaction a quinone + NADH + 5 H(+)(in) = a quinol + NAD(+) + 4 H(+)(out). NDH-1 shuttles electrons from NADH, via FMN and iron-sulfur (Fe-S) centers, to quinones in the respiratory chain. The immediate electron acceptor for the enzyme in this species is believed to be ubiquinone. Couples the redox reaction to proton translocation (for every two electrons transferred, four hydrogen ions are translocated across the cytoplasmic membrane), and thus conserves the redox energy in a proton gradient. This subunit may bind ubiquinone. This Magnetococcus marinus (strain ATCC BAA-1437 / JCM 17883 / MC-1) protein is NADH-quinone oxidoreductase subunit H.